The chain runs to 305 residues: MVAIIVHGGAGTIKKEERIPKVIEGVKEAVIVGWKELRKGSALDAVEEAIKVLEDNPIFNAGTGSVLTIDGKVEMDAAIMRGKTLEAGAVAGIWGVKNPISVARKVMEKTDHVLLVGEGAVKFARLMGFPEYNPITEERIEQWKELKEKLMKGEIKYWKKLGELIKEYPEVLRSTVGAVAFDGEEIVAGTSTGGVFLKMFGRVGDTPIIGAGTYANEVAGASCTGLGEVAIRLALAKTATDFVRLGMDAQAASNAAISLATKYFGKDTMGIIMVDAAGNVGFAKNTKHMSYAYMKDGMEEPEAGV.

Residue Thr-175 is the Nucleophile of the active site. Substrate-binding positions include 202 to 205 (RVGD) and 224 to 227 (TGLG).

This sequence belongs to the Ntn-hydrolase family. In terms of assembly, heterotetramer of two alpha and two beta chains arranged as a dimer of alpha/beta heterodimers. Autocleaved. Generates the alpha and beta subunits. The N-terminal residue of the beta subunit is thought to be responsible for the nucleophile hydrolase activity.

It catalyses the reaction L-asparagine + H2O = L-aspartate + NH4(+). In terms of biological role, catalyzes the hydrolysis of L-asparagine into L-aspartate and ammonia. This chain is Plant-type L-asparaginase, found in Pyrococcus horikoshii (strain ATCC 700860 / DSM 12428 / JCM 9974 / NBRC 100139 / OT-3).